The following is a 424-amino-acid chain: UDP-N-acetylglucosamine 1-carboxyvinyltransferase (424 aa).

22-23 (KN) contacts phosphoenolpyruvate. Residue Arg98 coordinates UDP-N-acetyl-alpha-D-glucosamine. Cys122 acts as the Proton donor in catalysis. At Cys122 the chain carries 2-(S-cysteinyl)pyruvic acid O-phosphothioketal. UDP-N-acetyl-alpha-D-glucosamine-binding positions include 127–131 (RPVDQ), Asp312, and Ile334.

It belongs to the EPSP synthase family. MurA subfamily.

Its subcellular location is the cytoplasm. The enzyme catalyses phosphoenolpyruvate + UDP-N-acetyl-alpha-D-glucosamine = UDP-N-acetyl-3-O-(1-carboxyvinyl)-alpha-D-glucosamine + phosphate. It functions in the pathway cell wall biogenesis; peptidoglycan biosynthesis. Its function is as follows. Cell wall formation. Adds enolpyruvyl to UDP-N-acetylglucosamine. This chain is UDP-N-acetylglucosamine 1-carboxyvinyltransferase, found in Xanthomonas campestris pv. campestris (strain 8004).